Reading from the N-terminus, the 495-residue chain is Lysine--tRNA ligase (495 aa).

Positions 406 and 413 each coordinate Mg(2+).

The protein belongs to the class-II aminoacyl-tRNA synthetase family. In terms of assembly, homodimer. Requires Mg(2+) as cofactor.

Its subcellular location is the cytoplasm. It carries out the reaction tRNA(Lys) + L-lysine + ATP = L-lysyl-tRNA(Lys) + AMP + diphosphate. The chain is Lysine--tRNA ligase (lysS) from Staphylococcus aureus.